The chain runs to 295 residues: Glycine N-phenylacetyltransferase (295 aa).

K43 is subject to N6-acetyllysine. K48 carries the N6-acetyllysine; alternate modification. An N6-succinyllysine; alternate modification is found at K48. K80 carries the post-translational modification N6-acetyllysine. N6-acetyllysine; alternate is present on K182. K182 bears the N6-succinyllysine; alternate mark.

This sequence belongs to the glycine N-acyltransferase family.

Its subcellular location is the mitochondrion. The enzyme catalyses phenylacetyl-CoA + glycine = phenylacetylglycine + CoA + H(+). Functionally, mitochondrial acyltransferase which transfers the acyl group to the N-terminus of glycine. Can conjugate a multitude of substrates to form a variety of N-acylglycines. Catalyzes the conjugation of arylacetic acids with glycine but does not have activity towards any alkyl-CoA. The polypeptide is Glycine N-phenylacetyltransferase (Bos taurus (Bovine)).